The sequence spans 64 residues: Large ribosomal subunit protein bL35 (64 aa).

It belongs to the bacterial ribosomal protein bL35 family.

This chain is Large ribosomal subunit protein bL35, found in Mycoplasmopsis pulmonis (strain UAB CTIP) (Mycoplasma pulmonis).